We begin with the raw amino-acid sequence, 89 residues long: Large ribosomal subunit protein bL28 (89 aa).

Belongs to the bacterial ribosomal protein bL28 family.

This is Large ribosomal subunit protein bL28 from Chlamydia pneumoniae (Chlamydophila pneumoniae).